The primary structure comprises 76 residues: Conotoxin Ca11b (76 aa).

The first 19 residues, 1–19, serve as a signal peptide directing secretion; it reads MKLVLAIVVILMLLSLSTG. Residues 20 to 42 constitute a propeptide that is removed on maturation; sequence AEMSDNHASMSANALRDRLLGPK. 4 disulfide bridges follow: C46–C60, C53–C65, C59–C69, and C64–C76.

Expressed by the venom duct.

The protein localises to the secreted. This chain is Conotoxin Ca11b, found in Conus caracteristicus (Characteristic cone).